Here is a 287-residue protein sequence, read N- to C-terminus: Casein kinase II subunit beta-1 (287 aa).

The tract at residues 1–97 (MYRDRGTVNS…ESDVSGSDGE (97 aa)) is disordered. Basic and acidic residues predominate over residues 13-25 (EVVDRKRINDALE). Positions 41 to 50 (GTVTAATTTA) are enriched in low complexity. The segment covering 78–97 (SDDESDTDSEESDVSGSDGE) has biased composition (acidic residues).

Belongs to the casein kinase 2 subunit beta family. As to quaternary structure, heterotetramer of two catalytic alpha subunits and two regulatory beta subunits. Interacts with CCA1. Interacts with LHY. In terms of processing, phosphorylated by alpha subunit.

Its subcellular location is the cytoplasm. It localises to the cytosol. The protein resides in the nucleus. Its function is as follows. Plays a complex role in regulating the basal catalytic activity of the alpha subunit. The tetrameric holoenzyme CK2, composed of two alpha and two beta subunits, phosphorylates the transcription factor GBFl, resulting in stimulation of its DNA binding activity. CK2 phosphorylates the transcription factor PIF1 after an exposure to light, resulting in a proteasome-dependent degradation of PIF1 and promotion of photomorphogenesis. CK2 phosphorylates translation initiation factors. May participate in the regulation of the initiation of translation. Stimulates the binding of CCA1 to promoters. The chain is Casein kinase II subunit beta-1 (CKB1) from Arabidopsis thaliana (Mouse-ear cress).